A 564-amino-acid polypeptide reads, in one-letter code: Phomacin cluster regulator phmR (564 aa).

The segment at residues 33–64 (CDRCRGHKLRCIRDQMTVDSPCQRCRKAREKC) is a DNA-binding region (zn(2)-C6 fungal-type). Disordered regions lie at residues 68–93 (SSTRPVPARLNRSSQGHKLPGATSSA), 152–197 (DFAD…NPFL), and 252–278 (PIHPPTMASSHRTHSTASNDSSKDSTT). 2 stretches are compositionally biased toward polar residues: residues 182–192 (ITPTSQGTTAV) and 258–278 (MASSHRTHSTASNDSSKDSTT).

The protein localises to the nucleus. Functionally, transcription factor that specifically regulates the expression of the gene cluster that mediates the biosynthesis of the mycotoxins phomacins, leucine-derived cytochalasans with potent actin polymerization-inhibitory activities and monocot-specific antigerminative activities. The polypeptide is Phomacin cluster regulator phmR (Phaeosphaeria nodorum (strain SN15 / ATCC MYA-4574 / FGSC 10173) (Glume blotch fungus)).